The following is a 319-amino-acid chain: uncharacterized protein (319 aa).

A signal peptide spans 1 to 27 (MYKKFVPFAVFLFLFFVSFEMMENPHA). The NodB homology domain occupies 130–306 (PMVAFLINVA…QIKDKGYALG (177 aa)).

Belongs to the polysaccharide deacetylase family.

This is an uncharacterized protein from Bacillus subtilis (strain 168).